The following is a 160-amino-acid chain: Transcription elongation factor GreA (160 aa).

A coiled-coil region spans residues 49-77; sequence SEYQSAKDEQAFVEGRIQTLKNMIDNAEI.

It belongs to the GreA/GreB family.

Its function is as follows. Necessary for efficient RNA polymerase transcription elongation past template-encoded arresting sites. The arresting sites in DNA have the property of trapping a certain fraction of elongating RNA polymerases that pass through, resulting in locked ternary complexes. Cleavage of the nascent transcript by cleavage factors such as GreA or GreB allows the resumption of elongation from the new 3'terminus. GreA releases sequences of 2 to 3 nucleotides. The chain is Transcription elongation factor GreA from Leuconostoc mesenteroides subsp. mesenteroides (strain ATCC 8293 / DSM 20343 / BCRC 11652 / CCM 1803 / JCM 6124 / NCDO 523 / NBRC 100496 / NCIMB 8023 / NCTC 12954 / NRRL B-1118 / 37Y).